We begin with the raw amino-acid sequence, 109 residues long: MFGKGGMGNLMKQAQQMQDKMAKVQEEIARMEVTGEAGAGLVKVTMTGSHSVRKVDIDASLLEDDKEMLEDLIAAACNDAARRVEENQKEKMAEVTGGMQLPPGMKMPF.

The tract at residues 87–109 (NQKEKMAEVTGGMQLPPGMKMPF) is disordered.

This sequence belongs to the YbaB/EbfC family. Homodimer.

The protein localises to the cytoplasm. It is found in the nucleoid. In terms of biological role, binds to DNA and alters its conformation. May be involved in regulation of gene expression, nucleoid organization and DNA protection. This Shewanella halifaxensis (strain HAW-EB4) protein is Nucleoid-associated protein Shal_1591.